Consider the following 592-residue polypeptide: Testis-specific serine kinase substrate (592 aa).

Ser-217 carries the phosphoserine modification. Positions 232–308 (QDETPRRQEA…VPAGWGMGPR (77 aa)) are disordered. Basic and acidic residues predominate over residues 234–264 (ETPRRQEAELQEPEEKQEPEEKQEPEEKQKP). Residues 269–281 (SWNSLGPAATSQG) are compositionally biased toward polar residues. The residue at position 288 (Ser-288) is a Phosphoserine; by TSSK1 and TSSK2. Ser-316 carries the phosphoserine modification. The interval 566 to 592 (LEGSTGTMGGGSSAGTPPKQGGSAPEQ) is disordered.

Post-translationally, phosphorylated on serine residue(s) by STK22A/TSSK1 and STK22B/TSSK2. As to expression, highly expressed in testis. Expressed at low levels in prostate, female breast, placenta, ovary and thymus.

It localises to the cytoplasm. Its subcellular location is the cytoskeleton. The protein localises to the microtubule organizing center. It is found in the centrosome. The protein resides in the centriole. May play a role in testicular physiology, most probably in the process of spermatogenesis or spermatid development. The protein is Testis-specific serine kinase substrate (TSKS) of Homo sapiens (Human).